Consider the following 267-residue polypeptide: Regulatory protein RecX (267 aa).

This sequence belongs to the RecX family.

It is found in the cytoplasm. Modulates RecA activity. The polypeptide is Regulatory protein RecX (Staphylococcus haemolyticus (strain JCSC1435)).